Consider the following 399-residue polypeptide: NADH-quinone oxidoreductase subunit D 2 (399 aa).

Residues 1–20 are disordered; it reads MIASKESNSAATPATSAPTL. The segment covering 9–20 has biased composition (low complexity); sequence SAATPATSAPTL.

The protein belongs to the complex I 49 kDa subunit family. NDH-1 is composed of 14 different subunits. Subunits NuoB, C, D, E, F, and G constitute the peripheral sector of the complex.

It is found in the cell inner membrane. The catalysed reaction is a quinone + NADH + 5 H(+)(in) = a quinol + NAD(+) + 4 H(+)(out). In terms of biological role, NDH-1 shuttles electrons from NADH, via FMN and iron-sulfur (Fe-S) centers, to quinones in the respiratory chain. The immediate electron acceptor for the enzyme in this species is believed to be ubiquinone. Couples the redox reaction to proton translocation (for every two electrons transferred, four hydrogen ions are translocated across the cytoplasmic membrane), and thus conserves the redox energy in a proton gradient. This Opitutus terrae (strain DSM 11246 / JCM 15787 / PB90-1) protein is NADH-quinone oxidoreductase subunit D 2.